Here is a 224-residue protein sequence, read N- to C-terminus: UPF0758 protein Rpic_2712 (224 aa).

The MPN domain occupies 102–224 (TFESAQSVKD…VYGFLEHGKM (123 aa)). The Zn(2+) site is built by His173, His175, and Asp186. A JAMM motif motif is present at residues 173-186 (HNHPTGNTEPSESD).

The protein belongs to the UPF0758 family.

This is UPF0758 protein Rpic_2712 from Ralstonia pickettii (strain 12J).